The chain runs to 843 residues: Translation initiation factor IF-2 (843 aa).

Disordered stretches follow at residues 50–72 (LKSS…KTTS) and 94–260 (QRSP…TGPV). The span at 96–135 (SPEEIQAEQKREQDERRAAENAARDKVDADVRQRNEEQAR) shows a compositional bias: basic and acidic residues. A compositionally biased stretch (low complexity) spans 139-173 (TATAAAAPAAKAEPAPAAAAPAPAPVVADAPASED). 2 stretches are compositionally biased toward basic and acidic residues: residues 174 to 203 (AAAR…RGEA) and 227 to 236 (TTDEESDGAR). Residues 237 to 250 (RGRGGKGKLKKRNQ) show a composition bias toward basic residues. One can recognise a tr-type G domain in the interval 343–516 (SRAPVVTVMG…EVLELTATPT (174 aa)). The interval 352-359 (GHVDHGKT) is G1. Position 352–359 (352–359 (GHVDHGKT)) interacts with GTP. The G2 stretch occupies residues 377 to 381 (GITQH). Positions 398–401 (DTPG) are G3. GTP-binding positions include 398–402 (DTPGH) and 452–455 (NKID). The segment at 452-455 (NKID) is G4. The segment at 488–490 (SAK) is G5.

It belongs to the TRAFAC class translation factor GTPase superfamily. Classic translation factor GTPase family. IF-2 subfamily.

It localises to the cytoplasm. One of the essential components for the initiation of protein synthesis. Protects formylmethionyl-tRNA from spontaneous hydrolysis and promotes its binding to the 30S ribosomal subunits. Also involved in the hydrolysis of GTP during the formation of the 70S ribosomal complex. The chain is Translation initiation factor IF-2 from Pseudomonas putida (strain W619).